Here is a 449-residue protein sequence, read N- to C-terminus: UDP-N-acetylmuramoylalanine--D-glutamate ligase (449 aa).

Residue 113–119 (GTNGKTT) coordinates ATP.

The protein belongs to the MurCDEF family.

The protein resides in the cytoplasm. It catalyses the reaction UDP-N-acetyl-alpha-D-muramoyl-L-alanine + D-glutamate + ATP = UDP-N-acetyl-alpha-D-muramoyl-L-alanyl-D-glutamate + ADP + phosphate + H(+). It functions in the pathway cell wall biogenesis; peptidoglycan biosynthesis. Its function is as follows. Cell wall formation. Catalyzes the addition of glutamate to the nucleotide precursor UDP-N-acetylmuramoyl-L-alanine (UMA). This Gloeothece citriformis (strain PCC 7424) (Cyanothece sp. (strain PCC 7424)) protein is UDP-N-acetylmuramoylalanine--D-glutamate ligase.